The following is a 184-amino-acid chain: Photosystem I assembly protein Ycf4 (184 aa).

The next 2 membrane-spanning stretches (helical) occupy residues 25–45 (ACIL…SYLG) and 57–77 (ILFV…LFIS).

This sequence belongs to the Ycf4 family.

Its subcellular location is the plastid. It is found in the chloroplast thylakoid membrane. Seems to be required for the assembly of the photosystem I complex. This chain is Photosystem I assembly protein Ycf4, found in Cycas taitungensis (Prince sago).